The following is a 398-amino-acid chain: Mitogen-activated protein kinase 1 (398 aa).

The segment at 1 to 26 (MDAGAQPPDTEMAEAGGGQQPPAAAA) is disordered. Residues 67–352 (KPPILPIGKG…VEGALAHPYL (286 aa)) enclose the Protein kinase domain. ATP is bound by residues 73-81 (IGKGAYGIV) and Lys-96. Asp-193 (proton acceptor) is an active-site residue. Thr-225 bears the Phosphothreonine mark. A TXY motif is present at residues 225–227 (TEY). Phosphotyrosine is present on Tyr-227.

Belongs to the protein kinase superfamily. CMGC Ser/Thr protein kinase family. MAP kinase subfamily. As to quaternary structure, may interact with RAC1. In terms of processing, dually phosphorylated on Thr-225 and Tyr-227, which activates the enzyme.

The enzyme catalyses L-seryl-[protein] + ATP = O-phospho-L-seryl-[protein] + ADP + H(+). It catalyses the reaction L-threonyl-[protein] + ATP = O-phospho-L-threonyl-[protein] + ADP + H(+). Its activity is regulated as follows. Activated by threonine and tyrosine phosphorylation. Activated in response to sphingolipid elicitor (SE). In terms of biological role, involved in sphingolipid elicitor (SE)-dependent defense signaling pathway. Acts downstream of heterotrimeric G protein alpha subunit and small GTPase RAC1. May regulate the expression of various genes involved in biotic and abiotic stress response. Involved in an abscisic acid signaling pathway that regulates the activities of antioxidant enzymes and the production of hydrogen peroxide. Acts downstream of CCAMK. The polypeptide is Mitogen-activated protein kinase 1 (MPK1) (Oryza sativa subsp. japonica (Rice)).